The chain runs to 185 residues: Ribosome-recycling factor (185 aa).

The protein belongs to the RRF family.

Its subcellular location is the cytoplasm. In terms of biological role, responsible for the release of ribosomes from messenger RNA at the termination of protein biosynthesis. May increase the efficiency of translation by recycling ribosomes from one round of translation to another. This is Ribosome-recycling factor from Thermotoga petrophila (strain ATCC BAA-488 / DSM 13995 / JCM 10881 / RKU-1).